A 152-amino-acid polypeptide reads, in one-letter code: Aspartate carbamoyltransferase regulatory chain (152 aa).

Cysteine 109, cysteine 114, cysteine 138, and cysteine 141 together coordinate Zn(2+).

It belongs to the PyrI family. In terms of assembly, contains catalytic and regulatory chains. Requires Zn(2+) as cofactor.

Functionally, involved in allosteric regulation of aspartate carbamoyltransferase. This is Aspartate carbamoyltransferase regulatory chain from Thermoplasma volcanium (strain ATCC 51530 / DSM 4299 / JCM 9571 / NBRC 15438 / GSS1).